The following is a 283-amino-acid chain: Elongation factor Ts (283 aa).

The involved in Mg(2+) ion dislocation from EF-Tu stretch occupies residues Thr-80–Val-83.

Belongs to the EF-Ts family.

It localises to the cytoplasm. In terms of biological role, associates with the EF-Tu.GDP complex and induces the exchange of GDP to GTP. It remains bound to the aminoacyl-tRNA.EF-Tu.GTP complex up to the GTP hydrolysis stage on the ribosome. This is Elongation factor Ts from Salmonella choleraesuis (strain SC-B67).